Consider the following 468-residue polypeptide: Ubiquitin carboxyl-terminal hydrolase 17-like protein B (468 aa).

A disordered region spans residues 1–20 (MVVALSFPEADPAMSPPSAP). The USP domain occupies 51–348 (CGLQNTGNSC…NAYVLFYVQQ (298 aa)). Cys60 (nucleophile) is an active-site residue. His307 (proton acceptor) is an active-site residue. Positions 374-449 (KKSGEKKHNK…GGQNLRNTEG (76 aa)) are disordered. A compositionally biased stretch (basic and acidic residues) spans 394–403 (CENREKRSSK). Residues 422–434 (GQKQENTKLTPQE) are compositionally biased toward polar residues.

This sequence belongs to the peptidase C19 family. USP17 subfamily. Post-translationally, ubiquitinated. Detected in brain, heart, liver, lung, kidney, ovary and spleen.

It carries out the reaction Thiol-dependent hydrolysis of ester, thioester, amide, peptide and isopeptide bonds formed by the C-terminal Gly of ubiquitin (a 76-residue protein attached to proteins as an intracellular targeting signal).. With respect to regulation, inhibited by ubiquitin aldehyde. Its function is as follows. Deubiquitinating enzyme that removes conjugated ubiquitin from specific proteins to regulate different cellular processes. This is Ubiquitin carboxyl-terminal hydrolase 17-like protein B from Mus musculus (Mouse).